The primary structure comprises 122 residues: Selenoprotein H (122 aa).

The residue at position 20 (Lys-20) is an N6-acetyllysine. A cross-link (cysteinyl-selenocysteine (Cys-Sec); redox-active) is located at residues Cys-41–Sec-44. A non-standard amino acid (selenocysteine) is located at residue Sec-44.

This sequence belongs to the SelWTH family.

May be involved in a redox-related process. In Homo sapiens (Human), this protein is Selenoprotein H.